A 144-amino-acid chain; its full sequence is Virulence protein STM3117 (144 aa).

The VOC domain maps to 23-143 (RIDHLVLTVS…DGNLIEISQY (121 aa)).

In terms of biological role, is critically involved in promoting the replication of S.typhimurium cells inside host macrophages, suggesting a role in the establishment of bacterial colonization within macrophages. May be involved in the biosynthesis and modification of the peptidoglycan layer of the cell wall. The chain is Virulence protein STM3117 from Salmonella typhimurium (strain LT2 / SGSC1412 / ATCC 700720).